The sequence spans 219 residues: Dual specificity phosphatase 29 (219 aa).

The region spanning 53–201 is the Tyrosine-protein phosphatase domain; the sequence is HVNEVWPKLY…LRELDRQLVQ (149 aa). 145–152 provides a ligand contact to substrate; that stretch reads HCVMGRSR. The active-site Phosphocysteine intermediate is Cys146.

The protein belongs to the protein-tyrosine phosphatase family. Non-receptor class dual specificity subfamily. As to quaternary structure, homodimer. Interacts with PRKAA2.

The protein resides in the cytoplasm. It is found in the nucleus. It catalyses the reaction O-phospho-L-tyrosyl-[protein] + H2O = L-tyrosyl-[protein] + phosphate. It carries out the reaction O-phospho-L-seryl-[protein] + H2O = L-seryl-[protein] + phosphate. The enzyme catalyses O-phospho-L-threonyl-[protein] + H2O = L-threonyl-[protein] + phosphate. Its function is as follows. Dual specificity phosphatase able to dephosphorylate phosphotyrosine, phosphoserine and phosphothreonine residues within the same substrate, with a preference for phosphotyrosine as a substrate. Involved in the modulation of intracellular signaling cascades. May regulate glucose metabolism by activating, AMPK, an energy sensor protein kinase. Affects MAP kinase signaling though modulation of the ERK1/2 cascade in skeletal muscle promoting muscle cell differentiation, development and atrophy. This Bos taurus (Bovine) protein is Dual specificity phosphatase 29 (DUSP29).